A 225-amino-acid polypeptide reads, in one-letter code: Thymidylate kinase (225 aa).

10-17 (GIDGAGKS) contacts ATP.

Belongs to the thymidylate kinase family.

It carries out the reaction dTMP + ATP = dTDP + ADP. In terms of biological role, phosphorylation of dTMP to form dTDP in both de novo and salvage pathways of dTTP synthesis. This chain is Thymidylate kinase, found in Polaromonas sp. (strain JS666 / ATCC BAA-500).